Reading from the N-terminus, the 168-residue chain is Crossover junction endodeoxyribonuclease RuvC (168 aa).

Catalysis depends on residues Asp-9, Glu-70, and Asp-145. Asp-9, Glu-70, and Asp-145 together coordinate Mg(2+).

This sequence belongs to the RuvC family. Homodimer which binds Holliday junction (HJ) DNA. The HJ becomes 2-fold symmetrical on binding to RuvC with unstacked arms; it has a different conformation from HJ DNA in complex with RuvA. In the full resolvosome a probable DNA-RuvA(4)-RuvB(12)-RuvC(2) complex forms which resolves the HJ. Mg(2+) serves as cofactor.

Its subcellular location is the cytoplasm. It catalyses the reaction Endonucleolytic cleavage at a junction such as a reciprocal single-stranded crossover between two homologous DNA duplexes (Holliday junction).. The RuvA-RuvB-RuvC complex processes Holliday junction (HJ) DNA during genetic recombination and DNA repair. Endonuclease that resolves HJ intermediates. Cleaves cruciform DNA by making single-stranded nicks across the HJ at symmetrical positions within the homologous arms, yielding a 5'-phosphate and a 3'-hydroxyl group; requires a central core of homology in the junction. The consensus cleavage sequence is 5'-(A/T)TT(C/G)-3'. Cleavage occurs on the 3'-side of the TT dinucleotide at the point of strand exchange. HJ branch migration catalyzed by RuvA-RuvB allows RuvC to scan DNA until it finds its consensus sequence, where it cleaves and resolves the cruciform DNA. The chain is Crossover junction endodeoxyribonuclease RuvC from Chlamydia caviae (strain ATCC VR-813 / DSM 19441 / 03DC25 / GPIC) (Chlamydophila caviae).